We begin with the raw amino-acid sequence, 192 residues long: Na(+)-translocating ferredoxin:NAD(+) oxidoreductase complex subunit A (192 aa).

6 helical membrane passes run 4-24, 38-58, 71-91, 101-121, 133-153, and 169-189; these read IFIM…FLGI, VGMG…TYVV, LQTI…EMII, ALGV…VALI, IFNG…FAGI, and FPIA…FSGM.

It belongs to the NqrDE/RnfAE family. In terms of assembly, the complex is composed of six subunits: RnfA, RnfB, RnfC, RnfD, RnfE and RnfG.

The protein resides in the cell membrane. It catalyses the reaction 2 reduced [2Fe-2S]-[ferredoxin] + Na(+)(in) + NAD(+) + H(+) = 2 oxidized [2Fe-2S]-[ferredoxin] + Na(+)(out) + NADH. Part of a membrane-bound complex that couples electron transfer with translocation of ions across the membrane. Couples electron transfer from reduced ferredoxin to NAD(+) with electrogenic movement of Na(+) out of the cell. Involved in caffeate respiration. The polypeptide is Na(+)-translocating ferredoxin:NAD(+) oxidoreductase complex subunit A (Acetobacterium woodii (strain ATCC 29683 / DSM 1030 / JCM 2381 / KCTC 1655 / WB1)).